The sequence spans 281 residues: NADPH-dependent 7-cyano-7-deazaguanine reductase (281 aa).

88–90 (IES) is a substrate binding site. 90–91 (SK) contributes to the NADPH binding site. Catalysis depends on Cys-189, which acts as the Thioimide intermediate. The active-site Proton donor is the Asp-196. Residue 228–229 (HE) coordinates substrate. An NADPH-binding site is contributed by 257-258 (RG).

This sequence belongs to the GTP cyclohydrolase I family. QueF type 2 subfamily. As to quaternary structure, homodimer.

The protein resides in the cytoplasm. It catalyses the reaction 7-aminomethyl-7-carbaguanine + 2 NADP(+) = 7-cyano-7-deazaguanine + 2 NADPH + 3 H(+). It functions in the pathway tRNA modification; tRNA-queuosine biosynthesis. Catalyzes the NADPH-dependent reduction of 7-cyano-7-deazaguanine (preQ0) to 7-aminomethyl-7-deazaguanine (preQ1). The chain is NADPH-dependent 7-cyano-7-deazaguanine reductase from Proteus mirabilis (strain HI4320).